The following is a 239-amino-acid chain: Pyridoxine 5'-phosphate synthase (239 aa).

Position 7 (N7) interacts with 3-amino-2-oxopropyl phosphate. Residue 9–10 participates in 1-deoxy-D-xylulose 5-phosphate binding; the sequence is DH. R18 contributes to the 3-amino-2-oxopropyl phosphate binding site. H43 functions as the Proton acceptor in the catalytic mechanism. 1-deoxy-D-xylulose 5-phosphate contacts are provided by R45 and H50. Residue E70 is the Proton acceptor of the active site. T100 contributes to the 1-deoxy-D-xylulose 5-phosphate binding site. H191 acts as the Proton donor in catalysis. Residues G192 and 213–214 contribute to the 3-amino-2-oxopropyl phosphate site; that span reads GH.

Belongs to the PNP synthase family. As to quaternary structure, homooctamer; tetramer of dimers.

It is found in the cytoplasm. It catalyses the reaction 3-amino-2-oxopropyl phosphate + 1-deoxy-D-xylulose 5-phosphate = pyridoxine 5'-phosphate + phosphate + 2 H2O + H(+). It functions in the pathway cofactor biosynthesis; pyridoxine 5'-phosphate biosynthesis; pyridoxine 5'-phosphate from D-erythrose 4-phosphate: step 5/5. Its function is as follows. Catalyzes the complicated ring closure reaction between the two acyclic compounds 1-deoxy-D-xylulose-5-phosphate (DXP) and 3-amino-2-oxopropyl phosphate (1-amino-acetone-3-phosphate or AAP) to form pyridoxine 5'-phosphate (PNP) and inorganic phosphate. The protein is Pyridoxine 5'-phosphate synthase of Geobacter sulfurreducens (strain ATCC 51573 / DSM 12127 / PCA).